We begin with the raw amino-acid sequence, 381 residues long: Creatine kinase B-type (381 aa).

Serine 4 is subject to Phosphoserine. The region spanning 11-98 is the Phosphagen kinase N-terminal domain; that stretch reads KLRFPAEDEF…FDPIIEDRHG (88 aa). Threonine 35 is subject to Phosphothreonine. Residue lysine 45 forms a Glycyl lysine isopeptide (Lys-Gly) (interchain with G-Cter in ubiquitin) linkage. Position 72 (valine 72) interacts with creatine. A compositionally biased stretch (basic and acidic residues) spans 96–110; it reads RHGGYKPSDEHKTDL. Residues 96–123 are disordered; the sequence is RHGGYKPSDEHKTDLNPDNLQGGDDLDP. Residues lysine 101 and lysine 107 each participate in a glycyl lysine isopeptide (Lys-Gly) (interchain with G-Cter in ubiquitin) cross-link. At tyrosine 125 the chain carries Phosphotyrosine. In terms of domain architecture, Phosphagen kinase C-terminal spans 125–367; the sequence is YVLSSRVRTG…KLLIEMEQRL (243 aa). Residues 128–132, arginine 130, arginine 132, and histidine 191 each bind ATP; that span reads SSRVR. The interval 130–138 is internal MTS-like signal; it reads RVRTGRSIR. Serine 199 carries the phosphoserine modification. Residue glutamate 232 coordinates creatine. Arginine 236 provides a ligand contact to ATP. Tyrosine 269 is modified (3'-nitrotyrosine). Residue serine 285 coordinates creatine. ATP is bound by residues arginine 292, 292-296, arginine 320, 320-325, and aspartate 335; these read RAGVH and RGTGGV. Threonine 322 carries the phosphothreonine modification. Residue lysine 381 forms a Glycyl lysine isopeptide (Lys-Gly) (interchain with G-Cter in ubiquitin) linkage.

This sequence belongs to the ATP:guanido phosphotransferase family. In terms of assembly, dimer of identical or non-identical chains, which can be either B (brain type) or M (muscle type). With MM being the major form in skeletal muscle and myocardium, MB existing in myocardium, and BB existing in many tissues, especially brain. Interacts with SLC12A6 (via C-terminus); the interaction may be required for SLC12A6 potassium-chloride cotransport activity. Ubiquitinated by the ECS(ASB9) complex, leading to its degradation by the proteasome.

The protein resides in the cytoplasm. The protein localises to the cytosol. It is found in the mitochondrion. Its subcellular location is the cell membrane. The catalysed reaction is creatine + ATP = N-phosphocreatine + ADP + H(+). In terms of biological role, reversibly catalyzes the transfer of phosphate between ATP and various phosphogens (e.g. creatine phosphate). Creatine kinase isoenzymes play a central role in energy transduction in tissues with large, fluctuating energy demands, such as skeletal muscle, heart, brain and spermatozoa. Acts as a key regulator of adaptive thermogenesis as part of the futile creatine cycle: localizes to the mitochondria of thermogenic fat cells and acts by mediating phosphorylation of creatine to initiate a futile cycle of creatine phosphorylation and dephosphorylation. During the futile creatine cycle, creatine and N-phosphocreatine are in a futile cycle, which dissipates the high energy charge of N-phosphocreatine as heat without performing any mechanical or chemical work. In Sus scrofa (Pig), this protein is Creatine kinase B-type (CKB).